The sequence spans 226 residues: Cytidylate kinase (226 aa).

10–18 (GPASSGKST) provides a ligand contact to ATP.

This sequence belongs to the cytidylate kinase family. Type 1 subfamily.

The protein resides in the cytoplasm. It carries out the reaction CMP + ATP = CDP + ADP. The catalysed reaction is dCMP + ATP = dCDP + ADP. This chain is Cytidylate kinase, found in Streptococcus thermophilus (strain ATCC BAA-491 / LMD-9).